We begin with the raw amino-acid sequence, 565 residues long: Nephronectin (565 aa).

The first 19 residues, 1–19, serve as a signal peptide directing secretion; that stretch reads MDFLLALVLVSSLYLQAAA. Residues 52–87 enclose the EGF-like 1 domain; sequence SWGQCQPVCQPRCKHGECIGPNKCKCHPGYAGKTCN. Cystine bridges form between Cys-56/Cys-69, Cys-60/Cys-75, Cys-77/Cys-86, Cys-93/Cys-104, Cys-100/Cys-113, and Cys-115/Cys-127. The EGF-like 2; calcium-binding domain maps to 89–128; it reads DLNECGLKPRPCKHRCMNTYGSYKCYCLNGYMLMPDGSCS. One can recognise an EGF-like 3 domain in the interval 132–168; that stretch reads TCSMANCQYGCDVVKGQIRCQCPSPGLQLAPDGRTCV. The 45-residue stretch at 169-213 folds into the EGF-like 4; calcium-binding domain; the sequence is DVDECATGRASCPRFRQCVNTFGSYICKCHKGFNLMYIGGKYQCH. 6 disulfide bridges follow: Cys-173–Cys-186, Cys-180–Cys-195, Cys-197–Cys-212, Cys-218–Cys-231, Cys-225–Cys-240, and Cys-242–Cys-253. The EGF-like 5; calcium-binding domain maps to 214-254; it reads DIDECSLGQYQCSSFARCYNIHGSYKCKCKEGYQGDGLTCV. Residues 301–373 are disordered; it reads YIPPIITNRP…PPGGITVDNR (73 aa). Positions 304 to 316 are enriched in low complexity; sequence PIITNRPTSKPTT. Pro residues predominate over residues 317 to 349; the sequence is RPTPKPTPIPTPPPPPPLPTELRTPLPPTTPER. The Integrin interaction signature appears at 382-384; sequence RGD. The 144-residue stretch at 420–563 folds into the MAM domain; it reads HSCNFDHGLC…VSLKKGHCSE (144 aa).

It belongs to the nephronectin family. In terms of assembly, homodimer and homotrimer.

The protein localises to the secreted. Its subcellular location is the extracellular space. The protein resides in the extracellular matrix. Functional ligand of integrin alpha-8/beta-1 in kidney development. Regulates the expression of GDNF with integrin alpha-8/beta-1 which is essential for kidney development. May also play a role in the development and function of various tissues, regulating cell adhesion, spreading and survival through the binding of several integrins. In Pongo abelii (Sumatran orangutan), this protein is Nephronectin (NPNT).